The following is a 449-amino-acid chain: Methionine aminopeptidase 2 (449 aa).

Residues 1-91 (MAAQAAPELA…PRIPLTTLFP (91 aa)) are disordered. The span at 34-50 (EEAENEGDSDDDRDDEQ) shows a compositional bias: acidic residues. Over residues 61-75 (KKKKKKRPKKKKKTA) the composition is skewed to basic residues. H199 serves as a coordination point for substrate. A divalent metal cation is bound by residues D219, D230, and H299. H307 provides a ligand contact to substrate. Residues E335 and E430 each contribute to the a divalent metal cation site.

This sequence belongs to the peptidase M24A family. Methionine aminopeptidase eukaryotic type 2 subfamily. Requires Co(2+) as cofactor. The cofactor is Zn(2+). Mn(2+) serves as cofactor. Fe(2+) is required as a cofactor.

It is found in the cytoplasm. It catalyses the reaction Release of N-terminal amino acids, preferentially methionine, from peptides and arylamides.. Cotranslationally removes the N-terminal methionine from nascent proteins. The N-terminal methionine is often cleaved when the second residue in the primary sequence is small and uncharged (Met-Ala-, Cys, Gly, Pro, Ser, Thr, or Val). The polypeptide is Methionine aminopeptidase 2 (Arthroderma benhamiae (strain ATCC MYA-4681 / CBS 112371) (Trichophyton mentagrophytes)).